The following is a 224-amino-acid chain: Peroxiredoxin-6 (224 aa).

The Thioredoxin domain maps to 5–169 (LLLGDVAPNF…ILRVVISLQL (165 aa)). Residues 31–40 (DSWGILFSHP) form a required and sufficient for targeting to lysosomes and lamellar bodies region. The residue at position 44 (threonine 44) is a Phosphothreonine. Cysteine 47 (cysteine sulfenic acid (-SOH) intermediate; for peroxidase activity) is an active-site residue. At lysine 63 the chain carries N6-acetyllysine. A Phosphotyrosine modification is found at tyrosine 89. Aspartate 140 functions as the For phospholipase activity in the catalytic mechanism. Threonine 177 is subject to Phosphothreonine; by MAPK. N6-acetyllysine; alternate is present on lysine 209. Lysine 209 carries the post-translational modification N6-succinyllysine; alternate.

Belongs to the peroxiredoxin family. Prx6 subfamily. In terms of assembly, homodimer. Interacts with GSTP1; mediates PRDX6 glutathionylation and regeneration. Interacts with APEX1. Interacts with STH. May interact with FAM168B. May interact with HTR2A. Post-translationally, irreversibly inactivated by overoxidation of Cys-47 to sulfinic acid (Cys-SO(2)H) and sulfonic acid (Cys-SO(3)H) forms upon oxidative stress. Phosphorylation at Thr-177 by MAP kinases increases the phospholipase activity of the enzyme. The phosphorylated form exhibits a greater lysophosphatidylcholine acyltransferase activity compared to the non-phosphorylated form.

Its subcellular location is the cytoplasm. The protein localises to the lysosome. It carries out the reaction a hydroperoxide + 2 glutathione = an alcohol + glutathione disulfide + H2O. The catalysed reaction is a 1,2-diacyl-sn-glycero-3-phosphocholine + H2O = a 1-acyl-sn-glycero-3-phosphocholine + a fatty acid + H(+). It catalyses the reaction a 1-acyl-sn-glycero-3-phosphocholine + an acyl-CoA = a 1,2-diacyl-sn-glycero-3-phosphocholine + CoA. The enzyme catalyses 1-hexadecanoyl-sn-glycero-3-phosphocholine + hexadecanoyl-CoA = 1,2-dihexadecanoyl-sn-glycero-3-phosphocholine + CoA. It carries out the reaction 1,2-dihexadecanoyl-sn-glycero-3-phosphocholine + H2O = 1-hexadecanoyl-sn-glycero-3-phosphocholine + hexadecanoate + H(+). Its function is as follows. Thiol-specific peroxidase that catalyzes the reduction of hydrogen peroxide and organic hydroperoxides to water and alcohols, respectively. Can reduce H(2)O(2) and short chain organic, fatty acid, and phospholipid hydroperoxides. Also has phospholipase activity, and can therefore either reduce the oxidized sn-2 fatty acyl group of phospholipids (peroxidase activity) or hydrolyze the sn-2 ester bond of phospholipids (phospholipase activity). These activities are dependent on binding to phospholipids at acidic pH and to oxidized phospholipds at cytosolic pH. Plays a role in cell protection against oxidative stress by detoxifying peroxides and in phospholipid homeostasis. Exhibits acyl-CoA-dependent lysophospholipid acyltransferase which mediates the conversion of lysophosphatidylcholine (1-acyl-sn-glycero-3-phosphocholine or LPC) into phosphatidylcholine (1,2-diacyl-sn-glycero-3-phosphocholine or PC). Shows a clear preference for LPC as the lysophospholipid and for palmitoyl CoA as the fatty acyl substrate. The sequence is that of Peroxiredoxin-6 (PRDX6) from Pongo abelii (Sumatran orangutan).